Consider the following 653-residue polypeptide: MPVGGLLPLFSSPAGGVLGGGLGGGGGRKGSGPAALRLTEKFVLLLVFSAFITLCFGAIFFLPDSSKLLSGVLFHSSPALQPAADHKPGPGARAEDAAEGRARRREEGAPGDPEAALEDNLARIRENHERALREAKETLQKLPEEIQRDILLEKKKVAQDQLRDKAPFRGLPPVDFVPPIGVESREPADAAIREKRAKIKEMMKHAWNNYKGYAWGLNELKPISKGGHSSSLFGNIKGATIVDALDTLFIMEMKHEFEEAKSWVEENLDFNVNAEISVFEVNIRFVGGLLSAYYLSGEEIFRKKAVELGVKLLPAFHTPSGIPWALLNMKSGIGRNWPWASGGSSILAEFGTLHLEFMHLSHLSGNPIFAEKVMNIRTVLNKLEKPQGLYPNYLNPSSGQWGQHHVSVGGLGDSFYEYLLKAWLMSDKTDLEAKKMYFDAVQAIETHLIRKSSSGLTYIAEWKGGLLEHKMGHLTCFAGGMFALGADAAPEGMAQHYLELGAEIARTCHESYNRTFMKLGPEAFRFDGGVEAIATRQNEKYYILRPEVMETYMYMWRLTHDPKYRKWAWEAVEALENHCRVNGGYSGLRDVYLLHESYDDVQQSFFLAETLKYLYLIFSDDDLLPLEHWIFNSEAHLLPILPKDKKEVEIREE.

The Cytoplasmic portion of the chain corresponds to 1–41 (MPVGGLLPLFSSPAGGVLGGGLGGGGGRKGSGPAALRLTEK). Residues 42-62 (FVLLLVFSAFITLCFGAIFFL) traverse the membrane as a helical; Signal-anchor for type II membrane protein segment. Over 63-653 (PDSSKLLSGV…DKKEVEIREE (591 aa)) the chain is Lumenal. The interval 81–116 (QPAADHKPGPGARAEDAAEGRARRREEGAPGDPEAA) is disordered. Over residues 84–108 (ADHKPGPGARAEDAAEGRARRREEG) the composition is skewed to basic and acidic residues. Cysteine 476 and cysteine 508 are joined by a disulfide. The N-linked (GlcNAc...) asparagine glycan is linked to asparagine 513. Glutamate 522 acts as the Proton donor in catalysis.

This sequence belongs to the glycosyl hydrolase 47 family. The cofactor is Ca(2+).

The protein localises to the golgi apparatus membrane. It carries out the reaction N(4)-(alpha-D-Man-(1-&gt;2)-alpha-D-Man-(1-&gt;2)-alpha-D-Man-(1-&gt;3)-[alpha-D-Man-(1-&gt;2)-alpha-D-Man-(1-&gt;3)-[alpha-D-Man-(1-&gt;2)-alpha-D-Man-(1-&gt;6)]-alpha-D-Man-(1-&gt;6)]-beta-D-Man-(1-&gt;4)-beta-D-GlcNAc-(1-&gt;4)-beta-D-GlcNAc)-L-asparaginyl-[protein] (N-glucan mannose isomer 9A1,2,3B1,2,3) + 4 H2O = N(4)-(alpha-D-Man-(1-&gt;3)-[alpha-D-Man-(1-&gt;3)-[alpha-D-Man-(1-&gt;6)]-alpha-D-Man-(1-&gt;6)]-beta-D-Man-(1-&gt;4)-beta-D-GlcNAc-(1-&gt;4)-beta-D-GlcNAc)-L-asparaginyl-[protein] (N-glucan mannose isomer 5A1,2) + 4 beta-D-mannose. It catalyses the reaction N(4)-(alpha-D-Man-(1-&gt;2)-alpha-D-Man-(1-&gt;2)-alpha-D-Man-(1-&gt;3)-[alpha-D-Man-(1-&gt;3)-[alpha-D-Man-(1-&gt;2)-alpha-D-Man-(1-&gt;6)]-alpha-D-Man-(1-&gt;6)]-beta-D-Man-(1-&gt;4)-beta-D-GlcNAc-(1-&gt;4)-beta-D-GlcNAc)-L-asparaginyl-[protein] (N-glucan mannose isomer 8A1,2,3B1,3) + 3 H2O = N(4)-(alpha-D-Man-(1-&gt;3)-[alpha-D-Man-(1-&gt;3)-[alpha-D-Man-(1-&gt;6)]-alpha-D-Man-(1-&gt;6)]-beta-D-Man-(1-&gt;4)-beta-D-GlcNAc-(1-&gt;4)-beta-D-GlcNAc)-L-asparaginyl-[protein] (N-glucan mannose isomer 5A1,2) + 3 beta-D-mannose. The protein operates within protein modification; protein glycosylation. Its activity is regulated as follows. Inhibited by both 1-deoxymannojirimycin and kifunensine. Its function is as follows. Involved in the maturation of Asn-linked oligosaccharides. Progressively trim alpha-1,2-linked mannose residues from Man(9)GlcNAc(2) to produce Man(5)GlcNAc(2). The chain is Mannosyl-oligosaccharide 1,2-alpha-mannosidase IA (MAN1A1) from Homo sapiens (Human).